A 465-amino-acid chain; its full sequence is Gamma-aminobutyric acid receptor subunit gamma-1 (465 aa).

The N-terminal stretch at 1–20 (MGSGKAFLFSPSLLWSQTRG) is a signal peptide. The Extracellular portion of the chain corresponds to 21 to 273 (VRLIFLLLTL…FDLSRRMGYF (253 aa)). N-linked (GlcNAc...) asparagine glycans are attached at residues Asn50 and Asn127. A disulfide bond links Cys188 and Cys202. Asn245 is a glycosylation site (N-linked (GlcNAc...) asparagine). The helical transmembrane segment at 274–294 (TIQTYIPCILTVVLSWVSFWI) threads the bilayer. The Cytoplasmic portion of the chain corresponds to 295 to 300 (NKDAVP). The chain crosses the membrane as a helical span at residues 301–320 (ARTSLGITTVLTMTTLSTIA). Residues 321 to 328 (RKSLPKVS) are Extracellular-facing. A helical transmembrane segment spans residues 329–349 (YVTAMDLFVSVCFIFVFAALM). Residues 350–444 (EYGTLHYFTS…RIAKIDSYSR (95 aa)) lie on the Cytoplasmic side of the membrane. A helical membrane pass occupies residues 445–465 (IFFPTAFALFNLVYWVGYLYL).

The protein belongs to the ligand-gated ion channel (TC 1.A.9) family. Gamma-aminobutyric acid receptor (TC 1.A.9.5) subfamily. GABRG1 sub-subfamily. As to quaternary structure, heteropentamer, formed by a combination of alpha (GABRA1-6), beta (GABRB1-3), gamma (GABRG1-3), delta (GABRD), epsilon (GABRE), rho (GABRR1-3), pi (GABRP) and theta (GABRQ) chains, each subunit exhibiting distinct physiological and pharmacological properties. Post-translationally, may be palmitoylated. In terms of tissue distribution, expressed in brain.

Its subcellular location is the postsynaptic cell membrane. It localises to the cell membrane. The enzyme catalyses chloride(in) = chloride(out). Functionally, gamma subunit of the heteropentameric ligand-gated chloride channel gated by gamma-aminobutyric acid (GABA), a major inhibitory neurotransmitter in the brain. GABA-gated chloride channels, also named GABA(A) receptors (GABAAR), consist of five subunits arranged around a central pore and contain GABA active binding site(s) located at the alpha and beta subunit interface(s). When activated by GABA, GABAARs selectively allow the flow of chloride anions across the cell membrane down their electrochemical gradient. Chloride influx into the postsynaptic neuron following GABAAR opening decreases the neuron ability to generate a new action potential, thereby reducing nerve transmission. The protein is Gamma-aminobutyric acid receptor subunit gamma-1 of Mus musculus (Mouse).